The following is a 391-amino-acid chain: Leucine aminopeptidase 1 (391 aa).

The N-terminal stretch at 1–19 (MKLSIALALGATASTGVLA) is a signal peptide. A propeptide spanning residues 20 to 91 (AVVPQQEPLI…YPTLHAGSYV (72 aa)) is cleaved from the precursor. A glycan (N-linked (GlcNAc...) asparagine) is linked at Asn183. Residues His191 and Asp210 each contribute to the Zn(2+) site. N-linked (GlcNAc...) asparagine glycosylation occurs at Asn235. The Zn(2+) site is built by Glu249 and Asp276. The cysteines at positions 325 and 329 are disulfide-linked. Zn(2+) is bound at residue His358.

Belongs to the peptidase M28 family. M28E subfamily. In terms of assembly, monomer. Zn(2+) is required as a cofactor.

The protein localises to the secreted. Functionally, extracellular aminopeptidase that allows assimilation of proteinaceous substrates. This chain is Leucine aminopeptidase 1 (lap1), found in Aspergillus niger (strain ATCC MYA-4892 / CBS 513.88 / FGSC A1513).